Consider the following 314-residue polypeptide: Methionyl-tRNA formyltransferase (314 aa).

A (6S)-5,6,7,8-tetrahydrofolate-binding site is contributed by 113 to 116 (SLLP).

This sequence belongs to the Fmt family.

The catalysed reaction is L-methionyl-tRNA(fMet) + (6R)-10-formyltetrahydrofolate = N-formyl-L-methionyl-tRNA(fMet) + (6S)-5,6,7,8-tetrahydrofolate + H(+). Its function is as follows. Attaches a formyl group to the free amino group of methionyl-tRNA(fMet). The formyl group appears to play a dual role in the initiator identity of N-formylmethionyl-tRNA by promoting its recognition by IF2 and preventing the misappropriation of this tRNA by the elongation apparatus. The chain is Methionyl-tRNA formyltransferase from Pseudomonas aeruginosa (strain LESB58).